A 419-amino-acid polypeptide reads, in one-letter code: eIF5-mimic protein 1 (419 aa).

Positions 1-22 (MNKHQKPVLTGQRFKTRKRDEK) are disordered. Lys117 carries the post-translational modification N6-acetyllysine. The 168-residue stretch at 248–415 (VQQSLGTRKE…QNAEEESESE (168 aa)) folds into the W2 domain. Phosphoserine is present on residues Ser412 and Ser414.

Belongs to the BZW family. As to quaternary structure, interacts with EIF3E, EIF2S2 and EIF3C.

It is found in the cytoplasm. Functionally, translation initiation regulator which represses non-AUG initiated translation and repeat-associated non-AUG (RAN) initiated translation by acting as a competitive inhibitor of eukaryotic translation initiation factor 5 (EIF5) function. Increases the accuracy of translation initiation by impeding EIF5-dependent translation from non-AUG codons by competing with it for interaction with EIF2S2 within the 43S pre-initiation complex (PIC) in an EIF3C-binding dependent manner. This chain is eIF5-mimic protein 1 (BZW2), found in Macaca fascicularis (Crab-eating macaque).